The sequence spans 328 residues: Biotin synthase (328 aa).

One can recognise a Radical SAM core domain in the interval 42 to 267 (YHVQLASLLS…LMPGSRVRLS (226 aa)). Residues cysteine 57, cysteine 61, and cysteine 64 each contribute to the [4Fe-4S] cluster site. [2Fe-2S] cluster-binding residues include cysteine 101, cysteine 133, cysteine 193, and arginine 265.

The protein belongs to the radical SAM superfamily. Biotin synthase family. As to quaternary structure, homodimer. The cofactor is [4Fe-4S] cluster. [2Fe-2S] cluster is required as a cofactor.

The enzyme catalyses (4R,5S)-dethiobiotin + (sulfur carrier)-SH + 2 reduced [2Fe-2S]-[ferredoxin] + 2 S-adenosyl-L-methionine = (sulfur carrier)-H + biotin + 2 5'-deoxyadenosine + 2 L-methionine + 2 oxidized [2Fe-2S]-[ferredoxin]. The protein operates within cofactor biosynthesis; biotin biosynthesis; biotin from 7,8-diaminononanoate: step 2/2. Its function is as follows. Catalyzes the conversion of dethiobiotin (DTB) to biotin by the insertion of a sulfur atom into dethiobiotin via a radical-based mechanism. This Synechococcus sp. (strain CC9311) protein is Biotin synthase.